The sequence spans 378 residues: Protein RecA (378 aa).

The tract at residues 1-20 is disordered; sequence MAAKKDKSVPDSKITDKEGK. 80–87 is a binding site for ATP; that stretch reads GAESSGKT. The tract at residues 344–378 is disordered; that stretch reads GPVDKKKKKSKKEASSDDTDDENLEIDDAIDENND. The span at 359–378 shows a compositional bias: acidic residues; that stretch reads SDDTDDENLEIDDAIDENND.

Belongs to the RecA family.

The protein localises to the cytoplasm. Its function is as follows. Can catalyze the hydrolysis of ATP in the presence of single-stranded DNA, the ATP-dependent uptake of single-stranded DNA by duplex DNA, and the ATP-dependent hybridization of homologous single-stranded DNAs. It interacts with LexA causing its activation and leading to its autocatalytic cleavage. This Fusobacterium nucleatum subsp. nucleatum (strain ATCC 25586 / DSM 15643 / BCRC 10681 / CIP 101130 / JCM 8532 / KCTC 2640 / LMG 13131 / VPI 4355) protein is Protein RecA.